The primary structure comprises 202 residues: Imidazoleglycerol-phosphate dehydratase (202 aa).

The protein belongs to the imidazoleglycerol-phosphate dehydratase family.

Its subcellular location is the cytoplasm. The enzyme catalyses D-erythro-1-(imidazol-4-yl)glycerol 3-phosphate = 3-(imidazol-4-yl)-2-oxopropyl phosphate + H2O. It participates in amino-acid biosynthesis; L-histidine biosynthesis; L-histidine from 5-phospho-alpha-D-ribose 1-diphosphate: step 6/9. The protein is Imidazoleglycerol-phosphate dehydratase of Lactococcus lactis subsp. cremoris (strain SK11).